The following is a 377-amino-acid chain: Succinyl-diaminopimelate desuccinylase (377 aa).

His-68 is a Zn(2+) binding site. Residue Asp-70 is part of the active site. Asp-101 is a Zn(2+) binding site. Glu-135 serves as the catalytic Proton acceptor. Zn(2+) is bound by residues Glu-136, Glu-164, and His-350.

The protein belongs to the peptidase M20A family. DapE subfamily. As to quaternary structure, homodimer. Zn(2+) is required as a cofactor. Co(2+) serves as cofactor.

The enzyme catalyses N-succinyl-(2S,6S)-2,6-diaminopimelate + H2O = (2S,6S)-2,6-diaminopimelate + succinate. Its pathway is amino-acid biosynthesis; L-lysine biosynthesis via DAP pathway; LL-2,6-diaminopimelate from (S)-tetrahydrodipicolinate (succinylase route): step 3/3. Functionally, catalyzes the hydrolysis of N-succinyl-L,L-diaminopimelic acid (SDAP), forming succinate and LL-2,6-diaminopimelate (DAP), an intermediate involved in the bacterial biosynthesis of lysine and meso-diaminopimelic acid, an essential component of bacterial cell walls. This chain is Succinyl-diaminopimelate desuccinylase, found in Acinetobacter baylyi (strain ATCC 33305 / BD413 / ADP1).